An 81-amino-acid chain; its full sequence is Cytotoxin 2 (81 aa).

The signal sequence occupies residues 1 to 21 (MKTLLLTLVVVTIVCLDLGYT). Intrachain disulfides connect Cys-24-Cys-42, Cys-35-Cys-59, Cys-63-Cys-74, and Cys-75-Cys-80.

The protein belongs to the three-finger toxin family. Short-chain subfamily. Type IA cytotoxin sub-subfamily. In terms of assembly, monomer in solution; Homodimer and oligomer in the presence of negatively charged lipids forming a pore with a size ranging between 20 and 30 Angstroms. Expressed by the venom gland.

Its subcellular location is the secreted. It localises to the target cell membrane. In terms of biological role, basic protein that binds to cell membrane and depolarizes cardiomyocytes. It also shows lytic activities, but 2-fold less important than that of CTX-A4. It binds to the integrin alpha-V/beta-3 (ITGAV/ITGB3) with a moderate affinity. It may interact with sulfatides in the cell membrane which induces pore formation and cell internalization and is responsible for cytotoxicity in cardiomyocytes. It may also target the mitochondrial membrane and induce mitochondrial swelling and fragmentation. The protein is Cytotoxin 2 of Naja atra (Chinese cobra).